We begin with the raw amino-acid sequence, 340 residues long: Glyceraldehyde-3-phosphate dehydrogenase 2 (340 aa).

NADP(+)-binding positions include Arg12–Ile13, Arg78, and Thr120. D-glyceraldehyde 3-phosphate-binding positions include Ser151–Thr153 and Thr182. Cys152 (nucleophile) is an active-site residue. Asn183 serves as a coordination point for NADP(+). Residues Arg197, Thr210–Gly211, and Arg233 each bind D-glyceraldehyde 3-phosphate. Asn315 contributes to the NADP(+) binding site.

It belongs to the glyceraldehyde-3-phosphate dehydrogenase family. Homotetramer. Interacts with BrxC. In response to oxidative stress, the active site Cys likely reacts with bacillithiol (BSH) to form mixed disulfides to protect the Cys residue against overoxidation. S-bacillithiolation presumably leads to loss of catalytic activity. Debacillithiolation by monothiol bacilliredoxin BrxC restores the activity.

It localises to the cytoplasm. The enzyme catalyses D-glyceraldehyde 3-phosphate + phosphate + NADP(+) = (2R)-3-phospho-glyceroyl phosphate + NADPH + H(+). The catalysed reaction is D-glyceraldehyde 3-phosphate + phosphate + NAD(+) = (2R)-3-phospho-glyceroyl phosphate + NADH + H(+). Its pathway is carbohydrate biosynthesis; gluconeogenesis. Its function is as follows. Involved in the gluconeogenesis. Catalyzes the oxidative phosphorylation of glyceraldehyde 3-phosphate (G3P) to 1,3-bisphosphoglycerate (BPG) using the cofactor NADP. The first reaction step involves the formation of a hemiacetal intermediate between G3P and a cysteine residue, and this hemiacetal intermediate is then oxidized to a thioester, with concomitant reduction of NADP to NADPH. The reduced NADPH is then exchanged with the second NADP, and the thioester is attacked by a nucleophilic inorganic phosphate to produce BPG. This Bacillus subtilis (strain 168) protein is Glyceraldehyde-3-phosphate dehydrogenase 2.